Here is a 714-residue protein sequence, read N- to C-terminus: Polyribonucleotide nucleotidyltransferase (714 aa).

Mg(2+) contacts are provided by aspartate 487 and aspartate 493. The KH domain maps to 554-613 (PRIEVMTIPVDKIREVIGSGGKVIREIVEKTGAKINIEDDGTIKIASASGKEIEAARKWI). Residues 623–691 (GVVYEGTVVK…ERGKVRLSMK (69 aa)) enclose the S1 motif domain.

Belongs to the polyribonucleotide nucleotidyltransferase family. The cofactor is Mg(2+).

The protein localises to the cytoplasm. It carries out the reaction RNA(n+1) + phosphate = RNA(n) + a ribonucleoside 5'-diphosphate. Functionally, involved in mRNA degradation. Catalyzes the phosphorolysis of single-stranded polyribonucleotides processively in the 3'- to 5'-direction. This chain is Polyribonucleotide nucleotidyltransferase, found in Allorhizobium ampelinum (strain ATCC BAA-846 / DSM 112012 / S4) (Agrobacterium vitis (strain S4)).